Here is a 431-residue protein sequence, read N- to C-terminus: Enolase (431 aa).

Gln167 contacts (2R)-2-phosphoglycerate. Catalysis depends on Glu209, which acts as the Proton donor. Mg(2+) is bound by residues Asp246, Glu290, and Asp317. The (2R)-2-phosphoglycerate site is built by Lys342, Arg371, Ser372, and Lys393. Lys342 (proton acceptor) is an active-site residue.

It belongs to the enolase family. Component of the RNA degradosome, a multiprotein complex involved in RNA processing and mRNA degradation. The cofactor is Mg(2+).

It is found in the cytoplasm. The protein resides in the secreted. The protein localises to the cell surface. The catalysed reaction is (2R)-2-phosphoglycerate = phosphoenolpyruvate + H2O. It participates in carbohydrate degradation; glycolysis; pyruvate from D-glyceraldehyde 3-phosphate: step 4/5. Functionally, catalyzes the reversible conversion of 2-phosphoglycerate (2-PG) into phosphoenolpyruvate (PEP). It is essential for the degradation of carbohydrates via glycolysis. The protein is Enolase of Serratia proteamaculans (strain 568).